Here is a 396-residue protein sequence, read N- to C-terminus: Cytochrome b (396 aa).

Transmembrane regions (helical) follow at residues 37-57 (FGSL…ILAM), 81-102 (WLMR…YAHI), 117-137 (WNVG…GYVL), and 182-202 (FFTF…IHIM). Histidine 87 and histidine 101 together coordinate heme b. Positions 186 and 200 each coordinate heme b. Residue histidine 205 participates in a ubiquinone binding. 4 helical membrane passes run 230 to 250 (FKDI…SLLA), 292 to 312 (LGGV…PFTH), 324 to 344 (LAQI…WLGG), and 351 to 371 (FILM…LVFP).

The protein belongs to the cytochrome b family. In terms of assembly, the cytochrome bc1 complex contains 3 respiratory subunits (MT-CYB, CYC1 and UQCRFS1), 2 core proteins (UQCRC1 and UQCRC2) and probably 6 low-molecular weight proteins. It depends on heme b as a cofactor.

The protein resides in the mitochondrion inner membrane. Component of the ubiquinol-cytochrome c reductase complex (complex III or cytochrome b-c1 complex) that is part of the mitochondrial respiratory chain. The b-c1 complex mediates electron transfer from ubiquinol to cytochrome c. Contributes to the generation of a proton gradient across the mitochondrial membrane that is then used for ATP synthesis. The chain is Cytochrome b (mt-cyb) from Petromyzon marinus (Sea lamprey).